Reading from the N-terminus, the 164-residue chain is Thiol peroxidase (164 aa).

Positions 18–163 (INEGDFAPDF…FDAALAAYKN (146 aa)) constitute a Thioredoxin domain. Residue Cys60 is the Cysteine sulfenic acid (-SOH) intermediate of the active site. Cys60 and Cys93 are disulfide-bonded.

It belongs to the peroxiredoxin family. Tpx subfamily. In terms of assembly, homodimer.

The catalysed reaction is a hydroperoxide + [thioredoxin]-dithiol = an alcohol + [thioredoxin]-disulfide + H2O. Functionally, thiol-specific peroxidase that catalyzes the reduction of hydrogen peroxide and organic hydroperoxides to water and alcohols, respectively. Plays a role in cell protection against oxidative stress by detoxifying peroxides. The chain is Thiol peroxidase from Staphylococcus aureus (strain MRSA252).